A 207-amino-acid chain; its full sequence is Outer-membrane lipoprotein LolB (207 aa).

The signal sequence occupies residues 1–21; the sequence is MPLPDFRLIRLLPLAALVLTA. C22 carries N-palmitoyl cysteine lipidation. A lipid anchor (S-diacylglycerol cysteine) is attached at C22.

The protein belongs to the LolB family. In terms of assembly, monomer.

The protein resides in the cell outer membrane. Its function is as follows. Plays a critical role in the incorporation of lipoproteins in the outer membrane after they are released by the LolA protein. In Shigella dysenteriae serotype 1 (strain Sd197), this protein is Outer-membrane lipoprotein LolB.